A 192-amino-acid chain; its full sequence is Inosine triphosphate pyrophosphatase (192 aa).

An ITP-binding site is contributed by 11-16 (TGNKNK). E41 contributes to the Mg(2+) binding site. ITP contacts are provided by residues K53, 69–70 (DT), K86, 146–149 (FGWD), K169, and 174–175 (HR).

The protein belongs to the HAM1 NTPase family. As to quaternary structure, homodimer. Mg(2+) is required as a cofactor. It depends on Mn(2+) as a cofactor.

It is found in the cytoplasm. It carries out the reaction ITP + H2O = IMP + diphosphate + H(+). The catalysed reaction is dITP + H2O = dIMP + diphosphate + H(+). The enzyme catalyses XTP + H2O = XMP + diphosphate + H(+). Functionally, pyrophosphatase that hydrolyzes non-canonical purine nucleotides such as inosine triphosphate (ITP), deoxyinosine triphosphate (dITP) or xanthosine 5'-triphosphate (XTP) to their respective monophosphate derivatives. The enzyme does not distinguish between the deoxy- and ribose forms. Probably excludes non-canonical purines from RNA and DNA precursor pools, thus preventing their incorporation into RNA and DNA and avoiding chromosomal lesions. The polypeptide is Inosine triphosphate pyrophosphatase (Ciona intestinalis (Transparent sea squirt)).